A 548-amino-acid polypeptide reads, in one-letter code: Nodulation protein NolO (548 aa).

This sequence belongs to the NodU/CmcH family.

Its function is as follows. Involved in 6-O-carbamoylation of Nod-factors. In Bradyrhizobium diazoefficiens (strain JCM 10833 / BCRC 13528 / IAM 13628 / NBRC 14792 / USDA 110), this protein is Nodulation protein NolO (nolO).